The chain runs to 221 residues: Probable septum site-determining protein MinC (221 aa).

The protein belongs to the MinC family. As to quaternary structure, interacts with MinD and FtsZ.

Functionally, cell division inhibitor that blocks the formation of polar Z ring septums. Rapidly oscillates between the poles of the cell to destabilize FtsZ filaments that have formed before they mature into polar Z rings. Prevents FtsZ polymerization. The chain is Probable septum site-determining protein MinC from Shewanella baltica (strain OS223).